A 197-amino-acid chain; its full sequence is Fe/S biogenesis protein NfuA (197 aa).

Cys-155 and Cys-158 together coordinate [4Fe-4S] cluster.

This sequence belongs to the NfuA family. In terms of assembly, homodimer. It depends on [4Fe-4S] cluster as a cofactor.

Its function is as follows. Involved in iron-sulfur cluster biogenesis. Binds a 4Fe-4S cluster, can transfer this cluster to apoproteins, and thereby intervenes in the maturation of Fe/S proteins. Could also act as a scaffold/chaperone for damaged Fe/S proteins. The sequence is that of Fe/S biogenesis protein NfuA from Pseudomonas savastanoi pv. phaseolicola (strain 1448A / Race 6) (Pseudomonas syringae pv. phaseolicola (strain 1448A / Race 6)).